The following is a 242-amino-acid chain: Small ribosomal subunit protein uS2 (242 aa).

This sequence belongs to the universal ribosomal protein uS2 family.

This Shewanella sediminis (strain HAW-EB3) protein is Small ribosomal subunit protein uS2.